Reading from the N-terminus, the 185-residue chain is Ribosome-recycling factor (185 aa).

Belongs to the RRF family.

The protein localises to the cytoplasm. Its function is as follows. Responsible for the release of ribosomes from messenger RNA at the termination of protein biosynthesis. May increase the efficiency of translation by recycling ribosomes from one round of translation to another. This Bacillus cytotoxicus (strain DSM 22905 / CIP 110041 / 391-98 / NVH 391-98) protein is Ribosome-recycling factor.